A 159-amino-acid polypeptide reads, in one-letter code: Ribosomal RNA large subunit methyltransferase H (159 aa).

The S-adenosyl-L-methionine site is built by leucine 76 and glycine 108.

The protein belongs to the RNA methyltransferase RlmH family. As to quaternary structure, homodimer.

Its subcellular location is the cytoplasm. The catalysed reaction is pseudouridine(1915) in 23S rRNA + S-adenosyl-L-methionine = N(3)-methylpseudouridine(1915) in 23S rRNA + S-adenosyl-L-homocysteine + H(+). Functionally, specifically methylates the pseudouridine at position 1915 (m3Psi1915) in 23S rRNA. This Pediococcus pentosaceus (strain ATCC 25745 / CCUG 21536 / LMG 10740 / 183-1w) protein is Ribosomal RNA large subunit methyltransferase H.